The chain runs to 854 residues: Protein mono-ADP-ribosyltransferase PARP9 (854 aa).

2 consecutive Macro domains span residues 107–296 (LQVF…EFIL) and 306–487 (TPSF…AKRS). The PARP catalytic domain occupies 628–850 (IQQQKTQDEM…QHPWRGFASG (223 aa)).

This sequence belongs to the ARTD/PARP family. As to quaternary structure, forms a stable complex with E3 ligase DTX3L; the interaction is required for PARP9 mediated ADP-ribosylation of ubiquitin. Interacts (via PARP catalytic domain) with DTX3L (via N-terminus). Forms a complex with STAT1 and DTX3L independently of IFNB1 or IFNG-mediated STAT1 'Tyr-701' phosphorylation. Forms a complex with STAT1, DTX3L and histone H2B H2BC9/H2BJ; the interaction is likely to induce H2BC9/H2BJ ubiquitination. Interacts (via N-terminus) with STAT1. Interacts with PARP14 in IFNG-stimulated macrophages; the interaction prevents PARP14-mediated STAT1 and STAT6 ADP-riboslylation. Interacts with PARP1 (when poly-ADP-ribosylated). In terms of processing, ADP-ribosylated by PARP14. Expressed in lymphocyte-rich tissues, spleen, lymph nodes, peripheral blood lymphocytes and colonic mucosa. Expressed in macrophages. Also expressed in nonhematopoietic tissues such as heart and skeletal muscle. Isoform 2 is the predominant form. Most abundantly expressed in lymphomas with a brisk host inflammatory response. In diffuse large B-cell lymphomas tumors, expressed specifically by malignant B-cells.

It localises to the cytoplasm. The protein localises to the cytosol. It is found in the nucleus. The catalysed reaction is [protein]-C-terminal glycine + NAD(+) = [protein]-C-terminal O-(ADP-D-ribosyl)-glycine + nicotinamide. With respect to regulation, binding to poly(ADP-ribose) does not affect its activity. In terms of biological role, ADP-ribosyltransferase which, in association with E3 ligase DTX3L, plays a role in DNA damage repair and in immune responses including interferon-mediated antiviral defenses. Within the complex, enhances DTX3L E3 ligase activity which is further enhanced by PARP9 binding to poly(ADP-ribose). In association with DTX3L and in presence of E1 and E2 enzymes, mediates NAD(+)-dependent mono-ADP-ribosylation of ubiquitin which prevents ubiquitin conjugation to substrates such as histones. During DNA repair, PARP1 recruits PARP9/BAL1-DTX3L complex to DNA damage sites via PARP9 binding to ribosylated PARP1. Subsequent PARP1-dependent PARP9/BAL1-DTX3L-mediated ubiquitination promotes the rapid and specific recruitment of 53BP1/TP53BP1, UIMC1/RAP80, and BRCA1 to DNA damage sites. In response to DNA damage, PARP9-DTX3L complex is required for efficient non-homologous end joining (NHEJ); the complex function is negatively modulated by PARP9 activity. Dispensable for B-cell receptor (BCR) assembly through V(D)J recombination and class switch recombination (CSR). In macrophages, positively regulates pro-inflammatory cytokines production in response to IFNG stimulation by suppressing PARP14-mediated STAT1 ADP-ribosylation and thus promoting STAT1 phosphorylation. Also suppresses PARP14-mediated STAT6 ADP-ribosylation. This chain is Protein mono-ADP-ribosyltransferase PARP9 (PARP9), found in Homo sapiens (Human).